The sequence spans 366 residues: MNKIALYCRPGFEKECAAEITDKAGQKEIYGFARVKDNSGYVLFECYQHEDADRLIREIPFRELIFARQMLVVGELLRDLPPEDRVSPIVGMLHGVIERAGDLRVEVPDTNESKELLKFCRKFTVPLRNAMRQEKILQIRENTKRPVIHVFFIAPGCCYVGYSYSHNNSPFYMGIPRLKFPSDAPSRSTLKLEEAFHVFIPYDEWEERLASGLYAVDLGACPGGWTYQLVKRSMMVHAVDNGPMSQSLMDTGQVRHHKVDGFKFEPLVKNIYWLVCDMVEKPAKVTQLMADWLVNGWCREAIFNLKLPMKKRYEEVAHNLQKMNLQLKENGINAQIQAKHLYHDREEITVHVRRIWSAYAASRNND.

Residues serine 188, 221-224 (CPGG), aspartate 240, aspartate 260, and aspartate 277 each bind S-adenosyl-L-methionine. The active-site Proton acceptor is the lysine 306.

It belongs to the class I-like SAM-binding methyltransferase superfamily. RNA methyltransferase RlmE family. RlmM subfamily. Monomer.

It localises to the cytoplasm. It carries out the reaction cytidine(2498) in 23S rRNA + S-adenosyl-L-methionine = 2'-O-methylcytidine(2498) in 23S rRNA + S-adenosyl-L-homocysteine + H(+). Its function is as follows. Catalyzes the 2'-O-methylation at nucleotide C2498 in 23S rRNA. This chain is Ribosomal RNA large subunit methyltransferase M, found in Photorhabdus asymbiotica subsp. asymbiotica (strain ATCC 43949 / 3105-77) (Xenorhabdus luminescens (strain 2)).